The following is a 1216-amino-acid chain: ATP-dependent helicase/nuclease subunit A (1216 aa).

In terms of domain architecture, UvrD-like helicase ATP-binding spans 26–488 (QKKTAEQIEA…ILLKANFRSS (463 aa)). 47-54 (ASAGSGKT) provides a ligand contact to ATP. Positions 515–802 (KHQLVFANTK…ELMTIHKSKG (288 aa)) constitute a UvrD-like helicase C-terminal domain.

It belongs to the helicase family. AddA subfamily. As to quaternary structure, heterodimer of AddA and AddB/RexB. The cofactor is Mg(2+).

It carries out the reaction Couples ATP hydrolysis with the unwinding of duplex DNA by translocating in the 3'-5' direction.. It catalyses the reaction ATP + H2O = ADP + phosphate + H(+). In terms of biological role, the heterodimer acts as both an ATP-dependent DNA helicase and an ATP-dependent, dual-direction single-stranded exonuclease. Recognizes the chi site generating a DNA molecule suitable for the initiation of homologous recombination. The AddA nuclease domain is required for chi fragment generation; this subunit has the helicase and 3' -&gt; 5' nuclease activities. The protein is ATP-dependent helicase/nuclease subunit A of Streptococcus pneumoniae (strain ATCC 700669 / Spain 23F-1).